The chain runs to 185 residues: Small ribosomal subunit protein bS16 (185 aa).

The interval 83 to 185 (QWTHGNNPEK…APASEETTEG (103 aa)) is disordered. Over residues 89-125 (NPEKAKPGKKAQERDAERTQRDADRVAAEAQAKEDAK) the composition is skewed to basic and acidic residues. 2 stretches are compositionally biased toward low complexity: residues 126-146 (AAAAEAAEAAAAAAAEAAAAP) and 159-176 (VEAAAEEAPAAEAAAEEA).

The protein belongs to the bacterial ribosomal protein bS16 family.

This chain is Small ribosomal subunit protein bS16, found in Caulobacter sp. (strain K31).